The sequence spans 292 residues: Light-independent protochlorophyllide reductase iron-sulfur ATP-binding protein (292 aa).

Residues 10–15 and Lys-39 each bind ATP; that span reads GIGKST. Mg(2+) is bound at residue Ser-14. Cys-95 is a binding site for [4Fe-4S] cluster. 182–183 provides a ligand contact to ATP; sequence NR.

This sequence belongs to the NifH/BchL/ChlL family. As to quaternary structure, homodimer. Protochlorophyllide reductase is composed of three subunits; ChlL, ChlN and ChlB. Requires [4Fe-4S] cluster as cofactor.

It is found in the plastid. It localises to the chloroplast. The enzyme catalyses chlorophyllide a + oxidized 2[4Fe-4S]-[ferredoxin] + 2 ADP + 2 phosphate = protochlorophyllide a + reduced 2[4Fe-4S]-[ferredoxin] + 2 ATP + 2 H2O. Its pathway is porphyrin-containing compound metabolism; chlorophyll biosynthesis (light-independent). Functionally, component of the dark-operative protochlorophyllide reductase (DPOR) that uses Mg-ATP and reduced ferredoxin to reduce ring D of protochlorophyllide (Pchlide) to form chlorophyllide a (Chlide). This reaction is light-independent. The L component serves as a unique electron donor to the NB-component of the complex, and binds Mg-ATP. This Huperzia lucidula (Shining clubmoss) protein is Light-independent protochlorophyllide reductase iron-sulfur ATP-binding protein.